We begin with the raw amino-acid sequence, 351 residues long: MTSSSPILKQTPKFLSALEGQSHANPPVWFMRQAGRYLPEYRAVRATAPDFISFCFDPEKAAEVTLQPMRRFPFDASIVFADILLIPGALGQKVWFEAGEGPKLGDMPSVESMAEKAGEAGKALSLVGETLTRVRSALDPDKALIGFAGAPWTVATYMIEKGSSDRSGARTFAYQNPETLDALIQVLVDATIDYLAMQVDAGAQALKLFESWAEGLSEPLFDRLVTQPHIRIIEGLRARGVTVPIIGFPRGAGTLVEDYAARTPVQGVALDTSASAKLGQTIQKTKTIQGALDPLLLRAGGDALLKRVDEMLEQWNQGPYIFNLGHGILPDTPIAHVEAVLERVTGQKVGQ.

Residues 32-36 (RQAGR), phenylalanine 51, aspartate 82, tyrosine 157, serine 211, and histidine 326 contribute to the substrate site.

Belongs to the uroporphyrinogen decarboxylase family. In terms of assembly, homodimer.

Its subcellular location is the cytoplasm. It carries out the reaction uroporphyrinogen III + 4 H(+) = coproporphyrinogen III + 4 CO2. It functions in the pathway porphyrin-containing compound metabolism; protoporphyrin-IX biosynthesis; coproporphyrinogen-III from 5-aminolevulinate: step 4/4. Its function is as follows. Catalyzes the decarboxylation of four acetate groups of uroporphyrinogen III to yield coproporphyrinogen III. This Caulobacter vibrioides (strain ATCC 19089 / CIP 103742 / CB 15) (Caulobacter crescentus) protein is Uroporphyrinogen decarboxylase.